A 291-amino-acid polypeptide reads, in one-letter code: Phosphatidylglycerol--prolipoprotein diacylglyceryl transferase (291 aa).

7 consecutive transmembrane segments (helical) span residues 21 to 41, 60 to 80, 96 to 116, 124 to 144, 198 to 218, 225 to 245, and 258 to 278; these read IALHWYGFMYLVGFVFAMWLA, LLYAGFAGVFVGGRLGYVLFY, WDGGMSFHGGLVGVICAMWWF, FLQVADFIAPLVPFGLGMGRI, SQLYEMALEGIVLFIILNLYI, GSVSGLFLIGYGIFRVIVEFF, and ISMGQILSIPMILAGILMMIW. R143 lines the a 1,2-diacyl-sn-glycero-3-phospho-(1'-sn-glycerol) pocket.

The protein belongs to the Lgt family.

Its subcellular location is the cell inner membrane. It carries out the reaction L-cysteinyl-[prolipoprotein] + a 1,2-diacyl-sn-glycero-3-phospho-(1'-sn-glycerol) = an S-1,2-diacyl-sn-glyceryl-L-cysteinyl-[prolipoprotein] + sn-glycerol 1-phosphate + H(+). Its pathway is protein modification; lipoprotein biosynthesis (diacylglyceryl transfer). Its function is as follows. Catalyzes the transfer of the diacylglyceryl group from phosphatidylglycerol to the sulfhydryl group of the N-terminal cysteine of a prolipoprotein, the first step in the formation of mature lipoproteins. The chain is Phosphatidylglycerol--prolipoprotein diacylglyceryl transferase from Photorhabdus laumondii subsp. laumondii (strain DSM 15139 / CIP 105565 / TT01) (Photorhabdus luminescens subsp. laumondii).